Consider the following 29-residue polypeptide: Snaclec multactivase regulatory subunit (29 aa).

The region spanning 1 to 29 is the C-type lectin domain; the sequence is DCLPGWSVYEGRCYKVFNQKTWKAAEKFC. A disulfide bridge connects residues Cys2 and Cys13.

It belongs to the snaclec family. Heterodimer of a metalloproteinase subunit and a regulatory subunit comprising two homologous polypeptides disulfide-linked. As to expression, expressed by the venom gland.

The protein localises to the secreted. Its function is as follows. Multactivase, a carinactivase-like calcium-dependent prothrombin activator, activates prothrombin via recognition of the calcium ion bound conformation of its gamma-carboxyglutamic acid (GLA) domain, and the subsequent conversion of prothrombin to active thrombin is catalyzed by the catalytic subunit. This is Snaclec multactivase regulatory subunit from Echis multisquamatus (Central Asian sand viper).